Reading from the N-terminus, the 36-residue chain is Photosystem I reaction center subunit VIII (36 aa).

The chain crosses the membrane as a helical span at residues S8–L28.

Belongs to the PsaI family.

The protein localises to the plastid. Its subcellular location is the chloroplast thylakoid membrane. Functionally, may help in the organization of the PsaL subunit. The protein is Photosystem I reaction center subunit VIII of Solanum bulbocastanum (Wild potato).